The following is a 335-amino-acid chain: Pyridoxal 5'-phosphate synthase subunit PdxS (335 aa).

Asp59 contacts D-ribose 5-phosphate. Lys116 functions as the Schiff-base intermediate with D-ribose 5-phosphate in the catalytic mechanism. Gly188 contacts D-ribose 5-phosphate. Lys200 contributes to the D-glyceraldehyde 3-phosphate binding site. Residues Gly253 and 274 to 275 (GS) contribute to the D-ribose 5-phosphate site.

This sequence belongs to the PdxS/SNZ family. In terms of assembly, in the presence of PdxT, forms a dodecamer of heterodimers.

The catalysed reaction is aldehydo-D-ribose 5-phosphate + D-glyceraldehyde 3-phosphate + L-glutamine = pyridoxal 5'-phosphate + L-glutamate + phosphate + 3 H2O + H(+). It functions in the pathway cofactor biosynthesis; pyridoxal 5'-phosphate biosynthesis. Functionally, catalyzes the formation of pyridoxal 5'-phosphate from ribose 5-phosphate (RBP), glyceraldehyde 3-phosphate (G3P) and ammonia. The ammonia is provided by the PdxT subunit. Can also use ribulose 5-phosphate and dihydroxyacetone phosphate as substrates, resulting from enzyme-catalyzed isomerization of RBP and G3P, respectively. This chain is Pyridoxal 5'-phosphate synthase subunit PdxS, found in Desulfurococcus amylolyticus (strain DSM 18924 / JCM 16383 / VKM B-2413 / 1221n) (Desulfurococcus kamchatkensis).